The following is a 313-amino-acid chain: MESIGVLMMCPMSSYLENELEKRFNLLRFWTSPEKSVLLETHRNSIRAVVGNASAGADAQLISDLPNLEIVSSFSVGLDKIDLGKCKEKGIRVTNTPDVLTEDVADLAIGLILALLRRLCECDRYVRSGKWKQGEFQLTTKFSGKSVGIIGLGRIGTAIAKRAEAFSCPINYYSRTIKPDVAYKYYPTVVDLAQNSDILVVACPLTEQTRHIVDRQVMDALGAKGVLINIGRGPHVDEQELIKALTEGRLGGAALDVFEQEPHVPEELFGLENVVLLPHVGSGTVETRNAMADLVVGNLEAHFSGKSLLTPVV.

NADP(+) contacts are provided by residues 152–155, 174–176, 230–232, and Asp256; these read LGRI, SRT, and IGR. The active site involves Arg232. The active site involves Glu261. His279 (proton donor) is an active-site residue. Position 279–281 (279–281) interacts with NADP(+); sequence HVG.

The protein belongs to the D-isomer specific 2-hydroxyacid dehydrogenase family. GyaR subfamily. Homodimer.

The protein localises to the cytoplasm. The enzyme catalyses glycolate + NADP(+) = glyoxylate + NADPH + H(+). It catalyses the reaction (R)-glycerate + NAD(+) = 3-hydroxypyruvate + NADH + H(+). It carries out the reaction (R)-glycerate + NADP(+) = 3-hydroxypyruvate + NADPH + H(+). Strongly inhibited by oxalate. Catalyzes the NADPH-dependent reduction of glyoxylate and hydroxypyruvate (HP) into glycolate and glycerate in the cytoplasm, thus providing a cytosolic bypass to the photorespiratory core cycle. Mostly active in the presence of NADPH and hydroxypyruvate. The chain is Glyoxylate/hydroxypyruvate reductase A HPR2 (HPR2) from Arabidopsis thaliana (Mouse-ear cress).